Consider the following 116-residue polypeptide: ATP synthase lipid-binding protein, mitochondrial (116 aa).

The N-terminal 24 residues, 1 to 24 (MYCQRLALPLTRSLLASRAPLALR), are a transit peptide targeting the mitochondrion. A helical transmembrane segment spans residues 57–77 (VGVAGSGAGIGNVFGALVIGY). K84 carries the N6,N6,N6-trimethyllysine modification. A helical membrane pass occupies residues 92-112 (ILGFALSEAMGLFCLTMGFMI).

It belongs to the ATPase C chain family. As to quaternary structure, F-type ATPases have 2 components, CF(1) - the catalytic core - and CF(0) - the membrane proton channel. CF(1) has five subunits: alpha(3), beta(3), gamma(1), delta(1), epsilon(1). CF(0) has three main subunits: a, b and c. In terms of processing, trimethylated by ATPSCKMT at Lys-84. Methylation may be required for proper incorporation of the C subunit into the ATP synthase complex and mitochondrial respiration.

It is found in the mitochondrion membrane. In terms of biological role, mitochondrial membrane ATP synthase (F(1)F(0) ATP synthase or Complex V) produces ATP from ADP in the presence of a proton gradient across the membrane which is generated by electron transport complexes of the respiratory chain. F-type ATPases consist of two structural domains, F(1) - containing the extramembraneous catalytic core and F(0) - containing the membrane proton channel, linked together by a central stalk and a peripheral stalk. During catalysis, ATP synthesis in the catalytic domain of F(1) is coupled via a rotary mechanism of the central stalk subunits to proton translocation. Part of the complex F(0) domain. A homomeric c-ring of probably 10 subunits is part of the complex rotary element. This chain is ATP synthase lipid-binding protein, mitochondrial, found in Caenorhabditis briggsae.